A 139-amino-acid polypeptide reads, in one-letter code: MKILFVCTGNTCRSPLAESIAKEVMPNHQFESRGIFAVNNQGVSNYVEDLVEEHHLAETTLSQQFTEADLKADIILTMSYSHKELIEAHFGLQNHVFTLHEYVKEAGEVIDPYGGTKEMYVHTYEELVSLILKLKDIIC.

Catalysis depends on Cys7, which acts as the Nucleophile. Arg13 is an active-site residue. Asp111 functions as the Proton donor in the catalytic mechanism.

Belongs to the low molecular weight phosphotyrosine protein phosphatase family.

The enzyme catalyses O-phospho-L-tyrosyl-[protein] + H2O = L-tyrosyl-[protein] + phosphate. Inhibited by N-ethylmaleimide and sodium orthovanadate. Its function is as follows. Dephosphorylates the phosphotyrosine-containing proteins. In Staphylococcus aureus, this protein is Low molecular weight protein-tyrosine-phosphatase PtpB (ptpB).